The chain runs to 234 residues: MKNMLLMSGSKYKDTAYLVHTLPWLAQFLADYKGKKVAFVPYAGVRRSFDEYETAVKNALQSLELEIVSVHRGKQHRDIIEQADVIAIGGGNTFCLLKQMYEHDLLDAIRAKVNSGTPYFGWSAGANVAGSSIMTTNDMPITYPPSFNALNLFPHQINPHFISGKMQGHNGESREERLEEFLIVNPQSLVYAMPEGTALHIQGEQATVLGAQDILCFSEKMQLDTKAVNSTFNY.

Residues serine 123, aspartate 138, and histidine 160 each act as charge relay system in the active site.

The protein belongs to the peptidase S51 family.

Its subcellular location is the cytoplasm. The catalysed reaction is Dipeptidase E catalyzes the hydrolysis of dipeptides Asp-|-Xaa. It does not act on peptides with N-terminal Glu, Asn or Gln, nor does it cleave isoaspartyl peptides.. In terms of biological role, hydrolyzes dipeptides containing N-terminal aspartate residues. May play a role in allowing the cell to use peptide aspartate to spare carbon otherwise required for the synthesis of the aspartate family of amino acids. This Actinobacillus pleuropneumoniae serotype 3 (strain JL03) protein is Peptidase E.